A 732-amino-acid chain; its full sequence is Cullin-3B (732 aa).

Residues 662 to 724 enclose the Cullin neddylation domain; it reads DRKPQIEAAI…RDFLERDNTD (63 aa). Lys676 is covalently cross-linked (Glycyl lysine isopeptide (Lys-Gly) (interchain with G-Cter in NEDD8)).

Belongs to the cullin family. As to quaternary structure, interacts with BTB/POZ-MATH proteins BPM1 and BPM3. Post-translationally, neddylated. Deneddylated via its interaction with the COP9 signalosome (CSN) complex.

Its pathway is protein modification; protein ubiquitination. In terms of biological role, component of the cullin-RING ubiquitin ligases (CRL), or CUL3-RBX1-BTB protein E3 ligase complexes which mediate the ubiquitination and subsequent proteasomal degradation of target proteins. The functional specificity of the CRL complex depends on the BTB domain-containing protein as the substrate recognition component. Involved in embryo pattern formation and endosperm development. Required for the normal division and organization of the root stem cells and columella root cap cells. Regulates primary root growth by an unknown pathway, but in an ethylene-dependent manner. Functions in distal root patterning, by an ethylene-independent mechanism. Functionally redundant with CUL3A. The polypeptide is Cullin-3B (CUL3B) (Arabidopsis thaliana (Mouse-ear cress)).